The sequence spans 432 residues: Metacaspase-1 (432 aa).

2 stretches are compositionally biased toward low complexity: residues 1–14 (MYPGSGRYTYNNAG) and 29–59 (QQYGQQYGQQYEQQYGQQYGQQNDQQFSQQY). The segment at 1 to 70 (MYPGSGRYTY…PPPGPPPMAY (70 aa)) is disordered. Positions 60-70 (APPPGPPPMAY) are enriched in pro residues. Active-site residues include His-220 and Cys-276.

Belongs to the peptidase C14B family.

The protein resides in the cytoplasm. The protein localises to the nucleus. Its function is as follows. Mediates cell death (apoptosis) triggered by oxygen stress, salt stress or chronological aging. Regulated cell death can prevent a release of toxic cellular components, thus avoiding necrotic collapse of the colony, and can also provide nutrients for healthy cells. Therefore, regulated cell death in yeast colonies can be as important for their development as are apoptosis and related processes that occur within metazoa. In Saccharomyces cerevisiae (strain YJM789) (Baker's yeast), this protein is Metacaspase-1 (MCA1).